Consider the following 742-residue polypeptide: Protein CdcH (742 aa).

ATP contacts are provided by residues glycine 230–threonine 237 and glycine 503–threonine 510. The tract at residues phenylalanine 722–glutamine 742 is disordered. Polar residues predominate over residues lysine 723 to glutamine 734.

This sequence belongs to the AAA ATPase family. CDC48 subfamily.

Its function is as follows. May be part of a transduction pathway connecting light to cell division. The chain is Protein CdcH (cdcH) from Halobacterium salinarum (strain ATCC 700922 / JCM 11081 / NRC-1) (Halobacterium halobium).